We begin with the raw amino-acid sequence, 319 residues long: HPr kinase/phosphorylase (319 aa).

Residues His-146 and Lys-167 contribute to the active site. 161–168 (GESGLGKS) provides a ligand contact to ATP. Mg(2+) is bound at residue Ser-168. Asp-185 acts as the Proton acceptor; for phosphorylation activity. Proton donor; for dephosphorylation activity in catalysis. The important for the catalytic mechanism of both phosphorylation and dephosphorylation stretch occupies residues 209–218 (LEVRGIGLLD). Mg(2+) is bound at residue Glu-210. The active site involves Arg-252. Residues 273–278 (QVVAGR) form an important for the catalytic mechanism of dephosphorylation region.

The protein belongs to the HPrK/P family. Homohexamer. It depends on Mg(2+) as a cofactor.

It catalyses the reaction [HPr protein]-L-serine + ATP = [HPr protein]-O-phospho-L-serine + ADP + H(+). The catalysed reaction is [HPr protein]-O-phospho-L-serine + phosphate + H(+) = [HPr protein]-L-serine + diphosphate. Functionally, catalyzes the ATP- as well as the pyrophosphate-dependent phosphorylation of a specific serine residue in HPr, a phosphocarrier protein of the phosphoenolpyruvate-dependent sugar phosphotransferase system (PTS). HprK/P also catalyzes the pyrophosphate-producing, inorganic phosphate-dependent dephosphorylation (phosphorolysis) of seryl-phosphorylated HPr (P-Ser-HPr). The protein is HPr kinase/phosphorylase of Variovorax paradoxus (strain S110).